The sequence spans 268 residues: MNWNAHGAKILDMIRNSKPLVHHITNLVVMNDTANVTLHLGALPVMAHAVEEMEEMTSIASALVINIGTLSKHWIEAMFKAGKTANDKGIPIILDPVGAGATSYRTETCHRLLEELSVSVIRGNLGEVSILAGLGGEVKGVESVSAGGDAVDVAKALAAKQNCTVSITGKEDVISDGTRTVLVDNGHEWLTTLTGTGCSSTTAVAAFSAVERIPVTAAACALMCYGLAAEIAAPQAKGPASFKVAFYDALYNLNAEQIEKGGRVREVS.

Met-46 serves as a coordination point for substrate. ATP contacts are provided by Arg-122 and Thr-168. Gly-195 is a binding site for substrate.

It belongs to the Thz kinase family. The cofactor is Mg(2+).

The catalysed reaction is 5-(2-hydroxyethyl)-4-methylthiazole + ATP = 4-methyl-5-(2-phosphooxyethyl)-thiazole + ADP + H(+). It functions in the pathway cofactor biosynthesis; thiamine diphosphate biosynthesis; 4-methyl-5-(2-phosphoethyl)-thiazole from 5-(2-hydroxyethyl)-4-methylthiazole: step 1/1. In terms of biological role, catalyzes the phosphorylation of the hydroxyl group of 4-methyl-5-beta-hydroxyethylthiazole (THZ). This chain is Hydroxyethylthiazole kinase, found in Desulfatibacillum aliphaticivorans.